The following is a 509-amino-acid chain: Kelch repeat protein M-T9 (509 aa).

The region spanning 15–79 (SDVTVVAGDS…MYAGCDGLND (65 aa)) is the BTB domain. Kelch repeat units follow at residues 274-320 (VLYC…IVNG), 321-368 (YIYV…YRNE), 370-415 (WIVG…VYNN), 416-463 (RLYC…VYNK), and 465-509 (IYVL…NDEI).

The protein belongs to the poxviruses Kelch family.

This is Kelch repeat protein M-T9 from Myxoma virus (strain Lausanne) (MYXV).